The following is a 187-amino-acid chain: Elongation factor P (187 aa).

Belongs to the elongation factor P family.

The protein resides in the cytoplasm. The protein operates within protein biosynthesis; polypeptide chain elongation. Involved in peptide bond synthesis. Stimulates efficient translation and peptide-bond synthesis on native or reconstituted 70S ribosomes in vitro. Probably functions indirectly by altering the affinity of the ribosome for aminoacyl-tRNA, thus increasing their reactivity as acceptors for peptidyl transferase. The sequence is that of Elongation factor P from Mycolicibacterium smegmatis (strain ATCC 700084 / mc(2)155) (Mycobacterium smegmatis).